A 200-amino-acid chain; its full sequence is Protein Rv0461 (200 aa).

Positions 47-67 are disordered; that stretch reads DRAGKSWPGSTPKPQEDPVGV. A run of 3 helical transmembrane segments spans residues 102–122, 134–154, and 159–179; these read FVLVVLGVWIGAGEVGLSLFY, VFVVLVYVVACTVGGLILALV, and LITALSLGVMSGPFASVAAAA.

Its subcellular location is the cell membrane. The chain is Protein Rv0461 from Mycobacterium tuberculosis (strain ATCC 25618 / H37Rv).